A 324-amino-acid chain; its full sequence is Glyceraldehyde-3-phosphate dehydrogenase 1 (324 aa).

Residues 13 to 14 (RI), D35, and K85 contribute to the NAD(+) site. D-glyceraldehyde 3-phosphate contacts are provided by residues 157–159 (SCT), T188, 217–218 (TG), and R240. C158 serves as the catalytic Nucleophile. N322 contributes to the NAD(+) binding site.

This sequence belongs to the glyceraldehyde-3-phosphate dehydrogenase family. In terms of assembly, homotetramer.

It localises to the cytoplasm. The catalysed reaction is D-glyceraldehyde 3-phosphate + phosphate + NAD(+) = (2R)-3-phospho-glyceroyl phosphate + NADH + H(+). It functions in the pathway carbohydrate degradation; glycolysis; pyruvate from D-glyceraldehyde 3-phosphate: step 1/5. The polypeptide is Glyceraldehyde-3-phosphate dehydrogenase 1 (GPD-1) (Globodera rostochiensis (Golden nematode worm)).